Consider the following 580-residue polypeptide: Long-chain-fatty-acid--AMP ligase FadD28 (580 aa).

Residues 421 to 440 are disordered; the sequence is SERTFGGKIVTPSPGTPEGP.

Belongs to the ATP-dependent AMP-binding enzyme family.

The catalysed reaction is holo-[mycocerosate synthase] + a long-chain fatty acid + ATP = a long-chain fatty acyl-[mycocerosate synthase] + AMP + diphosphate. It carries out the reaction a long-chain fatty acid + ATP + H(+) = a long-chain fatty acyl-AMP + diphosphate. The enzyme catalyses holo-[mycocerosate synthase] + a long-chain fatty acyl-AMP = a long-chain fatty acyl-[mycocerosate synthase] + AMP + H(+). It participates in lipid metabolism; fatty acid biosynthesis. Functionally, involved in the biosynthesis of phthiocerol dimycocerosate (PDIM), a cell wall-associated lipid found only in pathogenic mycobacteria. Catalyzes the activation of long-chain fatty acids as acyl-adenylates (acyl-AMP), which are then transferred to the multifunctional polyketide synthase Mas for further chain extension. The protein is Long-chain-fatty-acid--AMP ligase FadD28 (fadD28) of Mycobacterium bovis (strain ATCC BAA-935 / AF2122/97).